The following is a 493-amino-acid chain: MTLIVTRDHAQWVHDMCRARAGNRYGYGGAFTLNPRDTTDCSGLVLQTAAWYGGRKDWIGNRYGSTESFRLDHKIVYDLGFRRLPPGGVAALGFTPVMLVGLQHGGGGRYSHTACTLMTMDIPGGPVKVSQRGVDWESRGEVNGVGVFLYDGARAWNDPLFHDFWYLDAKLEDGPTQSVDAAEILARATGLAYNRAVALLPAVRDGLIQADCTNPNRIAMWLAQIGHESDDFKATAEYASGDAYDTRTDLGNTPEVDGDGRLYKGRSWIMITGKDNYRDFSRWAHGRGLVPTPDYFVVHPLELSELRWAGIGAAWYWTVERPDINALSDRRDLETVTRRINGGLTNLDDRRRRYNLALAVGDQLLTLIGDDDELADPTIQRFIREIHGALFNTVVTQSPYGDPQNPDGSEPRSNLWQLHELIKNGDGMGHARYVEESARAGDLRELERVVRAAKGLGRDRSPEFIARARNVLAQIEAANPEYLQAYIARNGAL.

The protein belongs to the L5likevirus endolysin A protein family.

Functionally, endolysin that degrades host peptidoglycans and participates with the holin protein in the sequential events which lead to the programmed host cell lysis releasing the mature viral particles. Once the holin has permeabilized the host cell membrane, the endolysin can reach the periplasm and break down the peptidoglycan layer. This is Endolysin A (10) from Mycobacterium phage D29 (Mycobacteriophage D29).